The primary structure comprises 149 residues: Probable ubiquitin-conjugating enzyme E2 12 (149 aa).

A compositionally biased stretch (basic and acidic residues) spans 1-15; that stretch reads MASKRISRELRDMQR. Residues 1–22 are disordered; the sequence is MASKRISRELRDMQRHPPANCS. In terms of domain architecture, UBC core spans 1–148; that stretch reads MASKRISREL…AQKWTQKYAM (148 aa). The active-site Glycyl thioester intermediate is Cys86.

The protein belongs to the ubiquitin-conjugating enzyme family. In terms of tissue distribution, ubiquitously expressed at very low levels.

It catalyses the reaction S-ubiquitinyl-[E1 ubiquitin-activating enzyme]-L-cysteine + [E2 ubiquitin-conjugating enzyme]-L-cysteine = [E1 ubiquitin-activating enzyme]-L-cysteine + S-ubiquitinyl-[E2 ubiquitin-conjugating enzyme]-L-cysteine.. Its pathway is protein modification; protein ubiquitination. In terms of biological role, accepts the ubiquitin from the E1 complex and catalyzes its covalent attachment to other proteins. This chain is Probable ubiquitin-conjugating enzyme E2 12 (UBC12), found in Arabidopsis thaliana (Mouse-ear cress).